A 143-amino-acid polypeptide reads, in one-letter code: uncharacterized protein (143 aa).

Residues 65 to 85 traverse the membrane as a helical segment; that stretch reads LVWMLVGTIVLSLDIIFPALV.

Its subcellular location is the membrane. This is an uncharacterized protein from Saccharomyces cerevisiae (strain ATCC 204508 / S288c) (Baker's yeast).